The following is a 161-amino-acid chain: Cytochrome c-type biogenesis protein CcmE (161 aa).

At Met1 to Arg8 the chain is on the cytoplasmic side. A helical; Signal-anchor for type II membrane protein membrane pass occupies residues Leu9–Ala29. The Periplasmic segment spans residues Leu30–Tyr161. His131 and Tyr135 together coordinate heme.

Belongs to the CcmE/CycJ family.

The protein resides in the cell inner membrane. In terms of biological role, heme chaperone required for the biogenesis of c-type cytochromes. Transiently binds heme delivered by CcmC and transfers the heme to apo-cytochromes in a process facilitated by CcmF and CcmH. This chain is Cytochrome c-type biogenesis protein CcmE, found in Shewanella woodyi (strain ATCC 51908 / MS32).